A 235-amino-acid polypeptide reads, in one-letter code: Phosphoribosylaminoimidazole-succinocarboxamide synthase (235 aa).

This sequence belongs to the SAICAR synthetase family.

It carries out the reaction 5-amino-1-(5-phospho-D-ribosyl)imidazole-4-carboxylate + L-aspartate + ATP = (2S)-2-[5-amino-1-(5-phospho-beta-D-ribosyl)imidazole-4-carboxamido]succinate + ADP + phosphate + 2 H(+). It functions in the pathway purine metabolism; IMP biosynthesis via de novo pathway; 5-amino-1-(5-phospho-D-ribosyl)imidazole-4-carboxamide from 5-amino-1-(5-phospho-D-ribosyl)imidazole-4-carboxylate: step 1/2. The chain is Phosphoribosylaminoimidazole-succinocarboxamide synthase from Streptococcus thermophilus (strain ATCC BAA-250 / LMG 18311).